The sequence spans 140 residues: Large ribosomal subunit protein uL14 (140 aa).

This sequence belongs to the universal ribosomal protein uL14 family. In terms of assembly, part of the 50S ribosomal subunit. Forms a cluster with proteins L3 and L24e, part of which may contact the 16S rRNA in 2 intersubunit bridges.

Binds to 23S rRNA. Forms part of two intersubunit bridges in the 70S ribosome. The sequence is that of Large ribosomal subunit protein uL14 from Staphylothermus marinus (strain ATCC 43588 / DSM 3639 / JCM 9404 / F1).